Consider the following 132-residue polypeptide: UPF0299 membrane protein YohJ (132 aa).

Residues 1 to 6 (MSKTLN) lie on the Periplasmic side of the membrane. A helical transmembrane segment spans residues 7 to 27 (IIWQYLRAFVLIYACLYAGIF). At 28-30 (IAS) the chain is on the cytoplasmic side. Residues 31–51 (LLPVTIPGSIIGMLILFVLLA) traverse the membrane as a helical segment. Residues 52 to 62 (LQILPAKWVNP) are Periplasmic-facing. A helical membrane pass occupies residues 63-83 (GCYVLIRYMALLFVPIGVGVM). Residues 84-92 (QYFDLLRAQ) are Cytoplasmic-facing. Residues 93–113 (FGPVVVSCAISTLVVFLVVSW) traverse the membrane as a helical segment. At 114–132 (SSQLVHGERKVVGQKGSEE) the chain is on the periplasmic side.

The protein belongs to the UPF0299 family.

The protein resides in the cell inner membrane. The sequence is that of UPF0299 membrane protein YohJ (yohJ) from Escherichia coli O157:H7.